The chain runs to 206 residues: MMQIDWRLYAVLDTATLGSRDPLAMTAALLAGGIGVLQLRAKNLSVRQTAQLAQAILPLTKIAQIPLIINDDLGLALAVGADGVHLGVDDLPLDLARASFKGLIGYSPEGVADAQRAEKLGVDYLGVGPFAATTTKLDAGAPLGQAGLRAIVEAVDCPVVAIGGIAQHNVAEVRACGVAGIVVVSALLNATNPTQACREFLAHYKE.

4-amino-2-methyl-5-(diphosphooxymethyl)pyrimidine-binding positions include 38-42 (QLRAK) and Asn-70. Mg(2+) contacts are provided by Asp-71 and Asp-90. Ser-107 serves as a coordination point for 4-amino-2-methyl-5-(diphosphooxymethyl)pyrimidine. 133 to 135 (TTT) serves as a coordination point for 2-[(2R,5Z)-2-carboxy-4-methylthiazol-5(2H)-ylidene]ethyl phosphate. Lys-136 is a binding site for 4-amino-2-methyl-5-(diphosphooxymethyl)pyrimidine. Residues Gly-164 and 184–185 (VS) contribute to the 2-[(2R,5Z)-2-carboxy-4-methylthiazol-5(2H)-ylidene]ethyl phosphate site.

The protein belongs to the thiamine-phosphate synthase family. The cofactor is Mg(2+).

The enzyme catalyses 2-[(2R,5Z)-2-carboxy-4-methylthiazol-5(2H)-ylidene]ethyl phosphate + 4-amino-2-methyl-5-(diphosphooxymethyl)pyrimidine + 2 H(+) = thiamine phosphate + CO2 + diphosphate. It catalyses the reaction 2-(2-carboxy-4-methylthiazol-5-yl)ethyl phosphate + 4-amino-2-methyl-5-(diphosphooxymethyl)pyrimidine + 2 H(+) = thiamine phosphate + CO2 + diphosphate. The catalysed reaction is 4-methyl-5-(2-phosphooxyethyl)-thiazole + 4-amino-2-methyl-5-(diphosphooxymethyl)pyrimidine + H(+) = thiamine phosphate + diphosphate. Its pathway is cofactor biosynthesis; thiamine diphosphate biosynthesis; thiamine phosphate from 4-amino-2-methyl-5-diphosphomethylpyrimidine and 4-methyl-5-(2-phosphoethyl)-thiazole: step 1/1. Condenses 4-methyl-5-(beta-hydroxyethyl)thiazole monophosphate (THZ-P) and 2-methyl-4-amino-5-hydroxymethyl pyrimidine pyrophosphate (HMP-PP) to form thiamine monophosphate (TMP). This Herpetosiphon aurantiacus (strain ATCC 23779 / DSM 785 / 114-95) protein is Thiamine-phosphate synthase.